Consider the following 343-residue polypeptide: tRNA N6-adenosine threonylcarbamoyltransferase (343 aa).

The Fe cation site is built by H120 and H124. Substrate-binding positions include 142-146 (VVSGG), D175, G188, D192, and N281. D310 contributes to the Fe cation binding site.

The protein belongs to the KAE1 / TsaD family. Requires Fe(2+) as cofactor.

It localises to the cytoplasm. The catalysed reaction is L-threonylcarbamoyladenylate + adenosine(37) in tRNA = N(6)-L-threonylcarbamoyladenosine(37) in tRNA + AMP + H(+). Functionally, required for the formation of a threonylcarbamoyl group on adenosine at position 37 (t(6)A37) in tRNAs that read codons beginning with adenine. Is involved in the transfer of the threonylcarbamoyl moiety of threonylcarbamoyl-AMP (TC-AMP) to the N6 group of A37, together with TsaE and TsaB. TsaD likely plays a direct catalytic role in this reaction. The chain is tRNA N6-adenosine threonylcarbamoyltransferase from Bacillus thuringiensis subsp. konkukian (strain 97-27).